Consider the following 94-residue polypeptide: PqqA binding protein (94 aa).

This sequence belongs to the PqqD family. As to quaternary structure, monomer. Interacts with PqqE.

The protein operates within cofactor biosynthesis; pyrroloquinoline quinone biosynthesis. Functions as a PqqA binding protein and presents PqqA to PqqE, in the pyrroloquinoline quinone (PQQ) biosynthetic pathway. In Acinetobacter baumannii (strain SDF), this protein is PqqA binding protein.